A 378-amino-acid polypeptide reads, in one-letter code: Cytochrome b (378 aa).

The next 4 membrane-spanning stretches (helical) occupy residues 34–54 (FGSLLGLCLIIQILTGLFLAM), 78–99 (WLLRTLHANGASFFFICIYLHV), 114–134 (WLIGVIILFLVMGTAFMGYVL), and 179–199 (FFTFHFILPFIVLAMTMIHLL). Heme b contacts are provided by histidine 84 and histidine 98. Residues histidine 183 and histidine 197 each contribute to the heme b site. A ubiquinone is bound at residue histidine 202. Helical transmembrane passes span 227–247 (FKDIVGFTVMIFILISLVLIS), 289–309 (LGGVIALVLSIAILMILPFYN), 321–341 (INQVMFWSMLVTVILLTWIGA), and 348–368 (YVLIGQILTVMYFLYYLVNPL).

The protein belongs to the cytochrome b family. In terms of assembly, the main subunits of complex b-c1 are: cytochrome b, cytochrome c1 and the Rieske protein. It depends on heme b as a cofactor.

The protein resides in the mitochondrion inner membrane. In terms of biological role, component of the ubiquinol-cytochrome c reductase complex (complex III or cytochrome b-c1 complex) that is part of the mitochondrial respiratory chain. The b-c1 complex mediates electron transfer from ubiquinol to cytochrome c. Contributes to the generation of a proton gradient across the mitochondrial membrane that is then used for ATP synthesis. In Drosophila sechellia (Fruit fly), this protein is Cytochrome b (mt:Cyt-b).